Here is a 759-residue protein sequence, read N- to C-terminus: Arylphorin subunit C223 (759 aa).

A signal peptide spans 1–15 (MKIAIVLLAIVGLAA).

This sequence belongs to the hemocyanin family. Heterohexamer. In terms of tissue distribution, fat body.

It localises to the secreted. The protein resides in the extracellular space. Functionally, arylphorin is a larval storage protein (LSP) which may serve as a storage protein used primarily as a source of aromatic amino acids for protein synthesis during metamorphosis. It is a constituent of the sclerotizing system of the cuticle, and serves as a carrier for ecdysteroid hormone. This Calliphora vicina (Blue blowfly) protein is Arylphorin subunit C223.